Reading from the N-terminus, the 675-residue chain is Acetyl-coenzyme A synthetase 2 (675 aa).

Residues 206 to 209 and threonine 325 each bind CoA; that span reads RGGK. Residues 401-403, 425-430, aspartate 516, and arginine 531 contribute to the ATP site; these read GEP and DTMWQT. Position 539 (serine 539) interacts with CoA. Residue arginine 542 participates in ATP binding. Arginine 604 contributes to the CoA binding site.

It belongs to the ATP-dependent AMP-binding enzyme family.

It carries out the reaction acetate + ATP + CoA = acetyl-CoA + AMP + diphosphate. This is Acetyl-coenzyme A synthetase 2 (ACS2) from Zygosaccharomyces bailii.